Consider the following 106-residue polypeptide: Tubulin-specific chaperone A (106 aa).

A Phosphoserine modification is found at Ser94.

It belongs to the TBCA family.

The protein localises to the cytoplasm. The protein resides in the cytoskeleton. In terms of biological role, tubulin-folding protein; involved in the early step of the tubulin folding pathway. This chain is Tubulin-specific chaperone A (RBL2), found in Saccharomyces cerevisiae (strain ATCC 204508 / S288c) (Baker's yeast).